The following is a 266-amino-acid chain: Small ribosomal subunit protein uS3 (266 aa).

Residues 39–107 (VREYLKKKLK…PVHVNIEEIR (69 aa)) form the KH type-2 domain. The segment at 214 to 266 (PVVEEVTEDKRPRRNARPGDRRPRRDGEGGAPGARRGGPRRGAGKPEDGKTGE) is disordered. Basic and acidic residues-rich tracts occupy residues 230 to 241 (RPGDRRPRRDGE) and 257 to 266 (GKPEDGKTGE).

The protein belongs to the universal ribosomal protein uS3 family. In terms of assembly, part of the 30S ribosomal subunit. Forms a tight complex with proteins S10 and S14.

Functionally, binds the lower part of the 30S subunit head. Binds mRNA in the 70S ribosome, positioning it for translation. The chain is Small ribosomal subunit protein uS3 from Burkholderia thailandensis (strain ATCC 700388 / DSM 13276 / CCUG 48851 / CIP 106301 / E264).